We begin with the raw amino-acid sequence, 139 residues long: Prostate-associated microseminoprotein (139 aa).

A signal peptide spans 1–35 (MALRMLWAGQAKGILGGWRTICLVVSLFLQHPGVS). Cystine bridges form between C38–C78, C46–C69, C64–C100, C67–C77, and C91–C114. The interval 116–139 (GGGPDLEWGSANTPAPGASAPHSS) is disordered.

Belongs to the beta-microseminoprotein family.

The protein resides in the secreted. Acts as a ligand for C-C chemokine receptor CCR2. Signals through binding and activation of CCR2 and induces a strong chemotactic response and mobilization of intracellular calcium ions. Exhibits a chemotactic activity for monocytes and lymphocytes but not neutrophils. This Mus musculus (Mouse) protein is Prostate-associated microseminoprotein (Msmp).